Consider the following 233-residue polypeptide: Partner of Y14 and mago (233 aa).

Residues methionine 1–glutamate 153 form a disordered region. Residues glutamate 62–alanine 97 are a coiled coil. Residues glutamine 65–asparagine 90 are compositionally biased toward basic and acidic residues. The segment covering lysine 122–alanine 142 has biased composition (low complexity). Residues alanine 167–aspartate 199 adopt a coiled-coil conformation.

It belongs to the pym family. In terms of assembly, interacts (via N-terminus) with mago and tsu/Y14; the interaction is direct.

Its subcellular location is the cytoplasm. The protein resides in the nucleus. Regulator of the exon junction complex (EJC), a multiprotein complex that associates immediately upstream of the exon-exon junction on mRNAs and serves as a positional landmarks for the intron exon structure of genes and directs post-transcriptional processes in the cytoplasm such as mRNA export, nonsense-mediated mRNA decay (NMD) or translation. The polypeptide is Partner of Y14 and mago (Anopheles gambiae (African malaria mosquito)).